Reading from the N-terminus, the 328-residue chain is D-cysteine desulfhydrase (328 aa).

Lys51 is modified (N6-(pyridoxal phosphate)lysine).

It belongs to the ACC deaminase/D-cysteine desulfhydrase family. Homodimer. It depends on pyridoxal 5'-phosphate as a cofactor.

The catalysed reaction is D-cysteine + H2O = hydrogen sulfide + pyruvate + NH4(+) + H(+). Its function is as follows. Catalyzes the alpha,beta-elimination reaction of D-cysteine and of several D-cysteine derivatives. It could be a defense mechanism against D-cysteine. This Salmonella paratyphi A (strain AKU_12601) protein is D-cysteine desulfhydrase.